The following is a 143-amino-acid chain: Large ribosomal subunit protein uL11 (143 aa).

The protein belongs to the universal ribosomal protein uL11 family. Part of the ribosomal stalk of the 50S ribosomal subunit. Interacts with L10 and the large rRNA to form the base of the stalk. L10 forms an elongated spine to which L12 dimers bind in a sequential fashion forming a multimeric L10(L12)X complex. Post-translationally, one or more lysine residues are methylated.

In terms of biological role, forms part of the ribosomal stalk which helps the ribosome interact with GTP-bound translation factors. The sequence is that of Large ribosomal subunit protein uL11 from Burkholderia cenocepacia (strain HI2424).